The sequence spans 86 residues: Co-chaperonin GroES (86 aa).

It belongs to the GroES chaperonin family. In terms of assembly, heptamer of 7 subunits arranged in a ring. Interacts with the chaperonin GroEL.

The protein localises to the cytoplasm. In terms of biological role, together with the chaperonin GroEL, plays an essential role in assisting protein folding. The GroEL-GroES system forms a nano-cage that allows encapsulation of the non-native substrate proteins and provides a physical environment optimized to promote and accelerate protein folding. GroES binds to the apical surface of the GroEL ring, thereby capping the opening of the GroEL channel. This is Co-chaperonin GroES from Campylobacter concisus (strain 13826).